The primary structure comprises 360 residues: Phospho-N-acetylmuramoyl-pentapeptide-transferase (360 aa).

10 consecutive transmembrane segments (helical) span residues 25-45, 73-93, 97-117, 135-155, 170-190, 199-219, 236-256, 263-283, 288-308, and 338-358; these read RGIL…PWMI, TMGG…WADL, YVWV…VDDY, FWQS…APSA, IPLG…SSNA, GLAI…CYLS, AGEL…FLWF, VFMG…MAVI, MVLF…VIQV, and VIVR…ATLK.

The protein belongs to the glycosyltransferase 4 family. MraY subfamily. It depends on Mg(2+) as a cofactor.

It is found in the cell inner membrane. It catalyses the reaction UDP-N-acetyl-alpha-D-muramoyl-L-alanyl-gamma-D-glutamyl-meso-2,6-diaminopimeloyl-D-alanyl-D-alanine + di-trans,octa-cis-undecaprenyl phosphate = di-trans,octa-cis-undecaprenyl diphospho-N-acetyl-alpha-D-muramoyl-L-alanyl-D-glutamyl-meso-2,6-diaminopimeloyl-D-alanyl-D-alanine + UMP. Its pathway is cell wall biogenesis; peptidoglycan biosynthesis. Its function is as follows. Catalyzes the initial step of the lipid cycle reactions in the biosynthesis of the cell wall peptidoglycan: transfers peptidoglycan precursor phospho-MurNAc-pentapeptide from UDP-MurNAc-pentapeptide onto the lipid carrier undecaprenyl phosphate, yielding undecaprenyl-pyrophosphoryl-MurNAc-pentapeptide, known as lipid I. This chain is Phospho-N-acetylmuramoyl-pentapeptide-transferase, found in Pseudomonas syringae pv. syringae (strain B728a).